We begin with the raw amino-acid sequence, 178 residues long: Large ribosomal subunit protein uL10 (178 aa).

This sequence belongs to the universal ribosomal protein uL10 family. Part of the ribosomal stalk of the 50S ribosomal subunit. The N-terminus interacts with L11 and the large rRNA to form the base of the stalk. The C-terminus forms an elongated spine to which L12 dimers bind in a sequential fashion forming a multimeric L10(L12)X complex.

Functionally, forms part of the ribosomal stalk, playing a central role in the interaction of the ribosome with GTP-bound translation factors. The chain is Large ribosomal subunit protein uL10 from Mycobacterium tuberculosis (strain ATCC 25177 / H37Ra).